Consider the following 795-residue polypeptide: Lon protease (795 aa).

The Lon N-terminal domain occupies 11–203; the sequence is GRVIPVSDIV…KFIDYLLKQK (193 aa). 356–363 serves as a coordination point for ATP; sequence GPPGVGKT. Residues 593–771 enclose the Lon proteolytic domain; the sequence is DNVPGVVTGL…EDVLRETLGI (179 aa). Active-site residues include Ser-677 and Lys-720.

It belongs to the peptidase S16 family. In terms of assembly, homohexamer. Organized in a ring with a central cavity.

The protein resides in the cytoplasm. It carries out the reaction Hydrolysis of proteins in presence of ATP.. Its function is as follows. ATP-dependent serine protease that mediates the selective degradation of mutant and abnormal proteins as well as certain short-lived regulatory proteins. Required for cellular homeostasis and for survival from DNA damage and developmental changes induced by stress. Degrades polypeptides processively to yield small peptide fragments that are 5 to 10 amino acids long. Binds to DNA in a double-stranded, site-specific manner. The protein is Lon protease of Clostridium beijerinckii (strain ATCC 51743 / NCIMB 8052) (Clostridium acetobutylicum).